The primary structure comprises 162 residues: Caveolin-2 (162 aa).

The Cytoplasmic segment spans residues 1–86 (MGLETEKADA…FEVSKYLIYK (86 aa)). The residue at position 19 (Tyr19) is a Phosphotyrosine; by SRC. The disordered stretch occupies residues 19–40 (YSRHSGLGYPEPEKCAKSTQDR). Phosphoserine occurs at positions 20 and 23. Position 27 is a phosphotyrosine; by SRC (Tyr27). Residues 29 to 40 (EPEKCAKSTQDR) are compositionally biased toward basic and acidic residues. The residue at position 36 (Ser36) is a Phosphoserine. An intramembrane region (helical) is located at residues 87-107 (VLTVLLAIPLAFVAGILFATL). At 108 to 162 (SCLHIWIVVPFVKTCLMVLPSVQTVWHSITDGFIAPLYKSMGLIFSSISLRLSPE) the chain is on the cytoplasmic side.

This sequence belongs to the caveolin family. Monomer or homodimer. Interacts with CAV1; the interaction forms a stable heterooligomeric complex that is required for targeting to lipid rafts and for caveolae formation. Tyrosine phosphorylated forms do not form heterooligomers with the Tyr-19-phosphorylated form existing as a monomer or dimer, and the Tyr-27-form as a monomer only. Interacts (tyrosine phosphorylated form) with the SH2 domain-containing proteins, RASA1, NCK1 and SRC. Interacts (tyrosine phosphorylated form) with INSR, the interaction (Tyr-27-phosphorylated form) is increased on insulin stimulation. Interacts (Tyr-19 phosphorylated form) with MAPK1 (phosphorylated form); the interaction, promoted by insulin, leads to nuclear location and MAPK1 activation. Interacts with STAT3; the interaction is increased on insulin-induced tyrosine phosphorylation leading to STAT activation. Phosphorylated on serine and tyrosine residues. CAV1 promotes phosphorylation on Ser-23 which then targets the complex to the plasma membrane, lipid rafts and caveolae. Phosphorylation on Ser-36 appears to modulate mitosis in endothelial cells. Phosphorylation on both Tyr-19 and Tyr-27 is required for insulin-induced 'Ser-727' phosphorylation of STAT3 and its activation. Phosphorylation on Tyr-19 is required for insulin-induced phosphorylation of MAPK1 and DNA binding of STAT3. Tyrosine phosphorylation is induced by both EGF and insulin (By. similarity).

Its subcellular location is the nucleus. It is found in the cytoplasm. The protein resides in the golgi apparatus membrane. The protein localises to the cell membrane. It localises to the membrane. Its subcellular location is the caveola. Functionally, may act as a scaffolding protein within caveolar membranes. Interacts directly with G-protein alpha subunits and can functionally regulate their activity. Acts as an accessory protein in conjunction with CAV1 in targeting to lipid rafts and driving caveolae formation. The Ser-36 phosphorylated form has a role in modulating mitosis in endothelial cells. Positive regulator of cellular mitogenesis of the MAPK signaling pathway. Required for the insulin-stimulated nuclear translocation and activation of MAPK1 and STAT3, and the subsequent regulation of cell cycle progression. The sequence is that of Caveolin-2 (CAV2) from Didelphis virginiana (North American opossum).